Here is a 112-residue protein sequence, read N- to C-terminus: uncharacterized protein (112 aa).

To U.parvum UU089.1.

This is an uncharacterized protein from Synechocystis sp. (strain ATCC 27184 / PCC 6803 / Kazusa).